A 406-amino-acid polypeptide reads, in one-letter code: Cholinephosphotransferase 1 (406 aa).

At Ala2 the chain carries N-acetylalanine. The Cytoplasmic portion of the chain corresponds to Ala2 to Ala62. A helical membrane pass occupies residues Pro63 to Ser83. Asn64 is a CDP-choline binding site. Residues Tyr84–Pro93 lie on the Lumenal side of the membrane. The helical transmembrane segment at Tyr94–Ala118 threads the bilayer. Asp111 and Asp114 together coordinate Mg(2+). Arg119 contributes to the CDP-choline binding site. Over Arg119–Ser125 the chain is Cytoplasmic. The chain crosses the membrane as a helical span at residues Pro126 to Ala150. Asp132 contributes to the Mg(2+) binding site. The active-site Proton acceptor is His133. A Mg(2+)-binding site is contributed by Asp136. The Lumenal segment spans residues Ala151 to Phe160. The helical transmembrane segment at Phe161–Tyr179 threads the bilayer. Residues Val180–Asp190 lie on the Cytoplasmic side of the membrane. A helical membrane pass occupies residues Val191–Phe207. The Lumenal segment spans residues Gly208–Ile222. Residues Lys223–Leu248 traverse the membrane as a helical segment. Over His249–Leu265 the chain is Cytoplasmic. Residues Ser266–Ile281 form a helical membrane-spanning segment. Residues Tyr282–His293 are Lumenal-facing. The helical transmembrane segment at Pro294 to His316 threads the bilayer. Over Met317–Phe329 the chain is Cytoplasmic. A helical membrane pass occupies residues Leu330–Gln339. The Lumenal segment spans residues Tyr340–Asp346. The chain crosses the membrane as a helical span at residues Glu347–His376. Over Leu377–Asp406 the chain is Cytoplasmic.

This sequence belongs to the CDP-alcohol phosphatidyltransferase class-I family. Mg(2+) is required as a cofactor. The cofactor is Mn(2+). In terms of tissue distribution, highly expressed in testis, colon, small intestine, heart, prostate and spleen. Also detected in kidney, skeletal muscle, pancreas, leukocytes, ovary and thymus. Weakly expressed in the brain, placenta and lung. Overexpressed in cancerous breast epithelial cell lines.

Its subcellular location is the golgi apparatus membrane. It carries out the reaction CDP-choline + a 1,2-diacyl-sn-glycerol = a 1,2-diacyl-sn-glycero-3-phosphocholine + CMP + H(+). It catalyses the reaction 1-octadecanoyl-2-(5Z,8Z,11Z,14Z-eicosatetraenoyl)-sn-glycerol + CDP-choline = 1-octadecanoyl-2-(5Z,8Z,11Z,14Z-eicosatetraenoyl)-sn-glycero-3-phosphocholine + CMP + H(+). The enzyme catalyses 1-hexadecanoyl-2-(9Z-octadecenoyl)-sn-glycerol + CDP-choline = 1-hexadecanoyl-2-(9Z-octadecenoyl)-sn-glycero-3-phosphocholine + CMP + H(+). The catalysed reaction is 1-hexadecanoyl-2-(4Z,7Z,10Z,13Z,16Z,19Z-docosahexaenoyl)-sn-glycerol + CDP-choline = 1-hexadecanoyl-2-(4Z,7Z,10Z,13Z,16Z,19Z-docosahexaenoyl)-sn-glycero-3-phosphocholine + CMP + H(+). It carries out the reaction 1,2-dioctanoyl-sn-glycerol + CDP-choline = 1,2-dioctanoyl-sn-glycero-3-phosphocholine + CMP + H(+). It participates in phospholipid metabolism; phosphatidylcholine biosynthesis; phosphatidylcholine from phosphocholine: step 2/2. Functionally, catalyzes the final step of de novo phosphatidylcholine (PC) synthesis, i.e. the transfer of choline phosphate from CDP-choline to the free hydroxyl of a diacylglycerol (DAG), producing a PC. It thereby plays a central role in the formation and maintenance of vesicular membranes. The polypeptide is Cholinephosphotransferase 1 (Homo sapiens (Human)).